Here is a 175-residue protein sequence, read N- to C-terminus: Large ribosomal subunit protein uL10 (175 aa).

The protein belongs to the universal ribosomal protein uL10 family. As to quaternary structure, part of the ribosomal stalk of the 50S ribosomal subunit. The N-terminus interacts with L11 and the large rRNA to form the base of the stalk. The C-terminus forms an elongated spine to which L12 dimers bind in a sequential fashion forming a multimeric L10(L12)X complex.

Its function is as follows. Forms part of the ribosomal stalk, playing a central role in the interaction of the ribosome with GTP-bound translation factors. This is Large ribosomal subunit protein uL10 from Psychrobacter arcticus (strain DSM 17307 / VKM B-2377 / 273-4).